We begin with the raw amino-acid sequence, 406 residues long: UPF0754 membrane protein CYB_2931 (406 aa).

The next 2 helical transmembrane spans lie at 1–21 and 385–405; these read MAFWIYVVPPLAGLVIGYFTN and IVNLGGLLGFLVGCVQVLFLL.

It belongs to the UPF0754 family.

Its subcellular location is the cell inner membrane. This Synechococcus sp. (strain JA-2-3B'a(2-13)) (Cyanobacteria bacterium Yellowstone B-Prime) protein is UPF0754 membrane protein CYB_2931.